We begin with the raw amino-acid sequence, 563 residues long: 5-aminolevulinate synthase, mitochondrial (563 aa).

A mitochondrion-targeting transit peptide spans Met-1–Thr-18. Arg-137, Ser-251, and Lys-270 together coordinate substrate. Ser-303, His-331, and Thr-373 together coordinate pyridoxal 5'-phosphate. Residue Lys-376 is part of the active site. Lys-376 is subject to N6-(pyridoxal phosphate)lysine. Residues Thr-405 and Thr-406 each coordinate pyridoxal 5'-phosphate. Thr-491 is a substrate binding site.

Belongs to the class-II pyridoxal-phosphate-dependent aminotransferase family. As to quaternary structure, homodimer. The cofactor is pyridoxal 5'-phosphate.

The protein localises to the mitochondrion matrix. The catalysed reaction is succinyl-CoA + glycine + H(+) = 5-aminolevulinate + CO2 + CoA. Its pathway is porphyrin-containing compound metabolism; protoporphyrin-IX biosynthesis; 5-aminolevulinate from glycine: step 1/1. Catalyzes the synthesis of 5-aminolevulinate (ALA) from succinyl-CoA and glycine, the first and rate-limiting step in heme biosynthesis. The protein is 5-aminolevulinate synthase, mitochondrial (HEM1) of Yarrowia lipolytica (strain CLIB 122 / E 150) (Yeast).